Here is a 557-residue protein sequence, read N- to C-terminus: Ribonuclease J 2 (557 aa).

Zn(2+) contacts are provided by H76, H78, H144, and E166. 366 to 370 lines the substrate pocket; it reads HASSH.

Belongs to the metallo-beta-lactamase superfamily. RNA-metabolizing metallo-beta-lactamase-like family. Bacterial RNase J subfamily. As to quaternary structure, homodimer, may be a subunit of the RNA degradosome. Zn(2+) is required as a cofactor.

It localises to the cytoplasm. In terms of biological role, an RNase that has 5'-3' exonuclease and possibly endoonuclease activity. Involved in maturation of rRNA and in some organisms also mRNA maturation and/or decay. The sequence is that of Ribonuclease J 2 from Staphylococcus epidermidis (strain ATCC 35984 / DSM 28319 / BCRC 17069 / CCUG 31568 / BM 3577 / RP62A).